The primary structure comprises 201 residues: 3-isopropylmalate dehydratase small subunit (201 aa).

Belongs to the LeuD family. LeuD type 1 subfamily. In terms of assembly, heterodimer of LeuC and LeuD.

The enzyme catalyses (2R,3S)-3-isopropylmalate = (2S)-2-isopropylmalate. It participates in amino-acid biosynthesis; L-leucine biosynthesis; L-leucine from 3-methyl-2-oxobutanoate: step 2/4. Functionally, catalyzes the isomerization between 2-isopropylmalate and 3-isopropylmalate, via the formation of 2-isopropylmaleate. The chain is 3-isopropylmalate dehydratase small subunit from Shewanella amazonensis (strain ATCC BAA-1098 / SB2B).